A 423-amino-acid chain; its full sequence is Lipid droplet-regulating VLDL assembly factor AUP1 (423 aa).

The Cytoplasmic portion of the chain corresponds to 1–19 (METRGIEQMFDFQRLPNDR). An intramembrane segment occupies 20–40 (FILLLLLLYAPVGFCLMLLRI). The Cytoplasmic segment spans residues 41–423 (FIGVHVFLVS…KHGLNKEDDL (383 aa)). The CUE domain occupies 304–346 (RIARLAQQVKEVLPDVPVSVITRDLLQTNCVDTTITNLLERTD). Residues 355–392 (TMPSGPGKAAASSTPSAMVSSPNLKPAAKSFGRSPIDR) form a disordered region. The segment covering 365 to 377 (ASSTPSAMVSSPN) has biased composition (polar residues).

Belongs to the AUP1 family.

It localises to the endoplasmic reticulum membrane. The protein resides in the lipid droplet. In terms of biological role, plays a role in the translocation of terminally misfolded proteins from the endoplasmic reticulum lumen to the cytoplasm and their degradation by the proteasome. Plays a role in lipid droplet formation. Induces lipid droplet clustering. The polypeptide is Lipid droplet-regulating VLDL assembly factor AUP1 (Danio rerio (Zebrafish)).